The primary structure comprises 143 residues: Sirohydrochlorin cobaltochelatase (143 aa).

The active-site Proton acceptor is His9. His9 contacts Co(2+). Residue His9 participates in Ni(2+) binding. Substrate is bound by residues Glu45 and Leu70–His75. His75 is a binding site for Co(2+). Residue His75 coordinates Ni(2+).

The protein belongs to the CbiX family. CbiXS subfamily. As to quaternary structure, homotetramer; dimer of dimers.

The catalysed reaction is Co-sirohydrochlorin + 2 H(+) = sirohydrochlorin + Co(2+). The enzyme catalyses Ni-sirohydrochlorin + 2 H(+) = sirohydrochlorin + Ni(2+). It participates in cofactor biosynthesis; adenosylcobalamin biosynthesis; cob(II)yrinate a,c-diamide from sirohydrochlorin (anaerobic route): step 1/10. In terms of biological role, catalyzes the insertion of Co(2+) into sirohydrochlorin as part of the anaerobic pathway to cobalamin biosynthesis. Involved in the biosynthesis of the unique nickel-containing tetrapyrrole coenzyme F430, the prosthetic group of methyl-coenzyme M reductase (MCR), which plays a key role in methanogenesis and anaerobic methane oxidation. Catalyzes the insertion of Ni(2+) into sirohydrochlorin to yield Ni-sirohydrochlorin. The polypeptide is Sirohydrochlorin cobaltochelatase (Methanopyrus kandleri (strain AV19 / DSM 6324 / JCM 9639 / NBRC 100938)).